Here is a 145-residue protein sequence, read N- to C-terminus: Ribosomal RNA large subunit methyltransferase H (145 aa).

S-adenosyl-L-methionine contacts are provided by residues L64, G93, and 112–117 (LSPLTF).

The protein belongs to the RNA methyltransferase RlmH family. In terms of assembly, homodimer.

The protein resides in the cytoplasm. The enzyme catalyses pseudouridine(1915) in 23S rRNA + S-adenosyl-L-methionine = N(3)-methylpseudouridine(1915) in 23S rRNA + S-adenosyl-L-homocysteine + H(+). Its function is as follows. Specifically methylates the pseudouridine at position 1915 (m3Psi1915) in 23S rRNA. This chain is Ribosomal RNA large subunit methyltransferase H, found in Prochlorococcus marinus (strain MIT 9211).